The following is a 124-amino-acid chain: Fluoride-specific ion channel FluC (124 aa).

Transmembrane regions (helical) follow at residues 20–40 (LLSI…TLLV), 60–80 (ISPE…TTFS), and 102–122 (VLLN…LIFS). Residues Gly-74 and Thr-77 each contribute to the Na(+) site.

It belongs to the fluoride channel Fluc/FEX (TC 1.A.43) family.

The protein localises to the cell inner membrane. The enzyme catalyses fluoride(in) = fluoride(out). With respect to regulation, na(+) is not transported, but it plays an essential structural role and its presence is essential for fluoride channel function. Functionally, fluoride-specific ion channel. Important for reducing fluoride concentration in the cell, thus reducing its toxicity. This chain is Fluoride-specific ion channel FluC, found in Shewanella frigidimarina (strain NCIMB 400).